The primary structure comprises 198 residues: Recombination protein RecR (198 aa).

A C4-type zinc finger spans residues 57–72 (CSVCHNITDTDPCRIC). Residues 80–175 (SVICVVQDAK…KVTRIAHGLP (96 aa)) form the Toprim domain.

Belongs to the RecR family.

In terms of biological role, may play a role in DNA repair. It seems to be involved in an RecBC-independent recombinational process of DNA repair. It may act with RecF and RecO. In Halalkalibacterium halodurans (strain ATCC BAA-125 / DSM 18197 / FERM 7344 / JCM 9153 / C-125) (Bacillus halodurans), this protein is Recombination protein RecR.